The primary structure comprises 225 residues: Peptidyl-tRNA hydrolase (225 aa).

Tyr-14 contributes to the tRNA binding site. The active-site Proton acceptor is the His-19. Positions 64, 66, and 112 each coordinate tRNA. The tract at residues 184 to 225 (ALRMQPPKPEKPKPAAKAPEAQAPEAAPDARSALQKLADRFR) is disordered. Low complexity predominate over residues 198 to 210 (AAKAPEAQAPEAA).

This sequence belongs to the PTH family. Monomer.

It is found in the cytoplasm. It carries out the reaction an N-acyl-L-alpha-aminoacyl-tRNA + H2O = an N-acyl-L-amino acid + a tRNA + H(+). Its function is as follows. Hydrolyzes ribosome-free peptidyl-tRNAs (with 1 or more amino acids incorporated), which drop off the ribosome during protein synthesis, or as a result of ribosome stalling. In terms of biological role, catalyzes the release of premature peptidyl moieties from peptidyl-tRNA molecules trapped in stalled 50S ribosomal subunits, and thus maintains levels of free tRNAs and 50S ribosomes. In Cereibacter sphaeroides (strain KD131 / KCTC 12085) (Rhodobacter sphaeroides), this protein is Peptidyl-tRNA hydrolase.